The following is a 308-amino-acid chain: ADP-L-glycero-D-manno-heptose-6-epimerase (308 aa).

Residues 10 to 11, 31 to 32, K38, K53, 75 to 79, and N92 each bind NADP(+); these read MI, DN, and EGACS. Y139 acts as the Proton acceptor in catalysis. K143 serves as a coordination point for NADP(+). N168 is a substrate binding site. NADP(+) contacts are provided by V169 and K177. Catalysis depends on K177, which acts as the Proton acceptor. Residues S179, H186, 200 to 203, R208, and Y271 each bind substrate; that span reads FAGS.

This sequence belongs to the NAD(P)-dependent epimerase/dehydratase family. HldD subfamily. Homopentamer. NADP(+) is required as a cofactor.

The catalysed reaction is ADP-D-glycero-beta-D-manno-heptose = ADP-L-glycero-beta-D-manno-heptose. It participates in nucleotide-sugar biosynthesis; ADP-L-glycero-beta-D-manno-heptose biosynthesis; ADP-L-glycero-beta-D-manno-heptose from D-glycero-beta-D-manno-heptose 7-phosphate: step 4/4. Catalyzes the interconversion between ADP-D-glycero-beta-D-manno-heptose and ADP-L-glycero-beta-D-manno-heptose via an epimerization at carbon 6 of the heptose. This Mannheimia succiniciproducens (strain KCTC 0769BP / MBEL55E) protein is ADP-L-glycero-D-manno-heptose-6-epimerase.